Consider the following 86-residue polypeptide: Small ribosomal subunit protein bS20 (86 aa).

The tract at residues 1-27 (MANNKSAKKRAIQAEKRRQHNASRRSM) is disordered.

The protein belongs to the bacterial ribosomal protein bS20 family.

Binds directly to 16S ribosomal RNA. This chain is Small ribosomal subunit protein bS20, found in Vibrio vulnificus (strain CMCP6).